A 417-amino-acid polypeptide reads, in one-letter code: UPF0597 protein Cphy_1256 (417 aa).

The protein belongs to the UPF0597 family.

In Lachnoclostridium phytofermentans (strain ATCC 700394 / DSM 18823 / ISDg) (Clostridium phytofermentans), this protein is UPF0597 protein Cphy_1256.